Reading from the N-terminus, the 392-residue chain is MAFLKLTEQNVQGKTVLIRADMNVPFKDGKISDDTRIRASLASIKYCVDNGASVIVMTHLGRPTEGEFHPEDDVAPVAAHLGSLLGKDVKVLNDWRENKPALNAGDVVMLQNVRINKGEKKNDLELGKAYASLCDVFVNDAFGTAHRAQASTEAVAQAAPVACAGVLMAGELDALGKALKQPARPMVAIVAGSKVSTKLTILESLADKVDQLIVGGGIANTFLLAEGKAIGKSLAEHDLVEESKKIMAKMAAKGGSVPLPTDVVVAKAFAADAEAVVKDIADVAEDEMILDIGPKSAAALADLLKAAGTVVWNGPVGVFEFDQFAGGTKALAEAIAQSKAFSIAGGGDTLAAIAKFGVTEQIGYISTGGGAFLEFLEGKELPAVAALEKRGA.

Substrate is bound by residues 21–23, Arg36, 59–62, Arg114, and Arg147; these read DMN and HLGR. ATP-binding positions include Lys198, Glu320, and 346 to 349; that span reads GGDT.

It belongs to the phosphoglycerate kinase family. Monomer.

It is found in the cytoplasm. It carries out the reaction (2R)-3-phosphoglycerate + ATP = (2R)-3-phospho-glyceroyl phosphate + ADP. Its pathway is carbohydrate degradation; glycolysis; pyruvate from D-glyceraldehyde 3-phosphate: step 2/5. In Neisseria meningitidis serogroup B (strain ATCC BAA-335 / MC58), this protein is Phosphoglycerate kinase (pgk).